A 364-amino-acid polypeptide reads, in one-letter code: uncharacterized protein (364 aa).

This is an uncharacterized protein from Escherichia coli (strain K12).